The sequence spans 314 residues: DNA topoisomerase I (314 aa).

The 238-residue stretch at 77–314 folds into the Topo IB-type catalytic domain; it reads IQNRNAKRDR…VDHVKSSTDG (238 aa). Y274 acts as the O-(3'-phospho-DNA)-tyrosine intermediate in catalysis.

It belongs to the type IB topoisomerase family.

Its subcellular location is the virion. The catalysed reaction is ATP-independent breakage of single-stranded DNA, followed by passage and rejoining.. Releases the supercoiling and torsional tension of DNA introduced during the DNA replication and transcription by transiently cleaving and rejoining one strand of the DNA duplex. Introduces a single-strand break via transesterification at the specific target site 5'-[CT]CCTTp site in duplex DNA. The scissile phosphodiester is attacked by the catalytic tyrosine of the enzyme, resulting in the formation of a DNA-(3'-phosphotyrosyl)-enzyme intermediate and the expulsion of a 5'-OH DNA strand. The free DNA strand then undergoes passage around the unbroken strand thus removing DNA supercoils. Finally, in the religation step, the DNA 5'-OH attacks the covalent intermediate to expel the active-site tyrosine and restore the DNA phosphodiester backbone. The chain is DNA topoisomerase I (OPG111) from Cynomys gunnisoni (Gunnison's prairie dog).